Consider the following 139-residue polypeptide: Large ribosomal subunit protein bL17 (139 aa).

The interval 117–139 (DRDPEAKGQDSGPVEIKDESEEG) is disordered.

It belongs to the bacterial ribosomal protein bL17 family. Part of the 50S ribosomal subunit. Contacts protein L32.

The sequence is that of Large ribosomal subunit protein bL17 from Rhodospirillum centenum (strain ATCC 51521 / SW).